The following is a 163-amino-acid chain: ATP synthase subunit delta, mitochondrial (163 aa).

The transit peptide at 1–18 (MLARTIQRFSVVAKRGYA) directs the protein to the mitochondrion.

This sequence belongs to the ATPase epsilon chain family. As to quaternary structure, subunit of the F-type ATPase which has 2 components, CF(1) - the catalytic core - and CF(0) - the membrane proton channel.

Its subcellular location is the mitochondrion. The protein resides in the mitochondrion inner membrane. Mitochondrial membrane ATP synthase (F(1)F(0) ATP synthase or Complex V) produces ATP from ADP in the presence of a proton gradient across the membrane which is generated by electron transport complexes of the respiratory chain. F-type ATPases consist of two structural domains, F(1) - containing the extramembraneous catalytic core, and F(0) - containing the membrane proton channel, linked together by a central stalk and a peripheral stalk. During catalysis, ATP turnover in the catalytic domain of F(1) is coupled via a rotary mechanism of the central stalk subunits to proton translocation. Part of the complex F(1) domain and of the central stalk which is part of the complex rotary element. This is ATP synthase subunit delta, mitochondrial from Caenorhabditis elegans.